We begin with the raw amino-acid sequence, 137 residues long: Small ribosomal subunit protein uS12 (137 aa).

A disordered region spans residues 1-57 (MPTINQLVRKPRQSKIKKSDSPALNKGFNSKKKKFTDLNSPQKRGVCTRVGTMTPRK). Asp102 is modified (3-methylthioaspartic acid). The segment at 118-137 (SGVDGRRQGRSLYGTKKPKN) is disordered.

It belongs to the universal ribosomal protein uS12 family. As to quaternary structure, part of the 30S ribosomal subunit. Contacts proteins S8 and S17. May interact with IF1 in the 30S initiation complex.

Its function is as follows. With S4 and S5 plays an important role in translational accuracy. Functionally, interacts with and stabilizes bases of the 16S rRNA that are involved in tRNA selection in the A site and with the mRNA backbone. Located at the interface of the 30S and 50S subunits, it traverses the body of the 30S subunit contacting proteins on the other side and probably holding the rRNA structure together. The combined cluster of proteins S8, S12 and S17 appears to hold together the shoulder and platform of the 30S subunit. In Staphylococcus aureus (strain COL), this protein is Small ribosomal subunit protein uS12.